The following is an 842-amino-acid chain: Circularly permutated Ras protein 1 (842 aa).

GTP-binding positions include 62–66, 121–124, and 181–188; these read DTAGQ, NKVD, and GGGGVGKS. Positions 253–274 are disordered; sequence SGKDKQPSPQQAASPSTIDRTG. Residues 259 to 274 show a composition bias toward polar residues; that stretch reads PSPQQAASPSTIDRTG. In terms of domain architecture, VWFA spans 377–627; that stretch reads IIIYCIDVSG…TQNPMIATDV (251 aa).

This sequence belongs to the small GTPase superfamily. CpRas family.

In Dictyostelium discoideum (Social amoeba), this protein is Circularly permutated Ras protein 1 (cpras1).